The chain runs to 225 residues: Mitochondrial inner membrane protease ATP23 (225 aa).

H124 lines the a divalent metal cation pocket. The active site involves E125. H128 serves as a coordination point for a divalent metal cation.

The protein belongs to the peptidase M76 family.

It localises to the mitochondrion inner membrane. Has a dual role in the assembly of mitochondrial ATPase. Acts as a protease that removes N-terminal residues of mitochondrial ATPase CF(0) subunit 6 at the intermembrane space side. Also involved in the correct assembly of the membrane-embedded ATPase CF(0) particle, probably mediating association of subunit 6 with the subunit 9 ring. In Candida glabrata (strain ATCC 2001 / BCRC 20586 / JCM 3761 / NBRC 0622 / NRRL Y-65 / CBS 138) (Yeast), this protein is Mitochondrial inner membrane protease ATP23 (ATP23).